A 347-amino-acid chain; its full sequence is Ketol-acid reductoisomerase (NADP(+)) (347 aa).

One can recognise a KARI N-terminal Rossmann domain in the interval 3 to 182; it reads TKMFYDKDID…GSGCAGILET (180 aa). NADP(+) is bound by residues 26–29, R49, S53, and 83–86; these read YGAQ and DELQ. H108 is an active-site residue. G134 serves as a coordination point for NADP(+). A KARI C-terminal knotted domain is found at 183–328; sequence TFEEETTEDL…KKVRAMMPWI (146 aa). The Mg(2+) site is built by D191, E195, E227, and E231. Residue S252 coordinates substrate.

Belongs to the ketol-acid reductoisomerase family. Requires Mg(2+) as cofactor.

The enzyme catalyses (2R)-2,3-dihydroxy-3-methylbutanoate + NADP(+) = (2S)-2-acetolactate + NADPH + H(+). It carries out the reaction (2R,3R)-2,3-dihydroxy-3-methylpentanoate + NADP(+) = (S)-2-ethyl-2-hydroxy-3-oxobutanoate + NADPH + H(+). The protein operates within amino-acid biosynthesis; L-isoleucine biosynthesis; L-isoleucine from 2-oxobutanoate: step 2/4. It functions in the pathway amino-acid biosynthesis; L-valine biosynthesis; L-valine from pyruvate: step 2/4. Functionally, involved in the biosynthesis of branched-chain amino acids (BCAA). Catalyzes an alkyl-migration followed by a ketol-acid reduction of (S)-2-acetolactate (S2AL) to yield (R)-2,3-dihydroxy-isovalerate. In the isomerase reaction, S2AL is rearranged via a Mg-dependent methyl migration to produce 3-hydroxy-3-methyl-2-ketobutyrate (HMKB). In the reductase reaction, this 2-ketoacid undergoes a metal-dependent reduction by NADPH to yield (R)-2,3-dihydroxy-isovalerate. The chain is Ketol-acid reductoisomerase (NADP(+)) from Leuconostoc mesenteroides subsp. cremoris.